Here is an 85-residue protein sequence, read N- to C-terminus: Large ribosomal subunit protein bL27 (85 aa).

The tract at residues 1 to 20 is disordered; sequence MAHKKGGGTTRNGRDSESKR.

This sequence belongs to the bacterial ribosomal protein bL27 family.

The sequence is that of Large ribosomal subunit protein bL27 from Herminiimonas arsenicoxydans.